Here is a 595-residue protein sequence, read N- to C-terminus: TNF receptor-associated factor family protein DDB_G0272348 (595 aa).

Residues 14 to 64 (SFTNNNSNNNNNNNNNSNSNNNNNNNNNNINNNNNHNNNNKNNSNNKNEIN) are disordered. Residues 17–64 (NNNSNNNNNNNNNSNSNNNNNNNNNNINNNNNHNNNNKNNSNNKNEIN) are compositionally biased toward low complexity. Residues 87-134 (CTICSDLLVNSFHADKFKAVQCKNGHYTTCLNCWEKHLEKKKNCIQCG) form an RING-type; degenerate zinc finger. TRAF-type zinc fingers lie at residues 189-253 (EHLK…INKE) and 254-311 (SHNA…SKLS). Positions 348–410 (LLNGQNKKIT…QQQQSQQQQQ (63 aa)) form a coiled coil. The span at 409–440 (QQSQQQQQSQQSQQNNNSNSHFINNNNNNINN) shows a compositional bias: low complexity. A disordered region spans residues 409–450 (QQSQQQQQSQQSQQNNNSNSHFINNNNNNINNVQMSDSPNGG). Polar residues predominate over residues 441-450 (VQMSDSPNGG). The 129-residue stretch at 456–584 (VYKNKWVISN…NDSITIEIEI (129 aa)) folds into the MATH domain.

This sequence belongs to the TNF receptor-associated factor family. A subfamily.

The protein localises to the cytoplasm. Its function is as follows. Probable adapter protein and signal transducer that links members of the tumor necrosis factor receptor family to different signaling pathways by association with the receptor cytoplasmic domain and kinases. This is TNF receptor-associated factor family protein DDB_G0272348 from Dictyostelium discoideum (Social amoeba).